The following is an 840-amino-acid chain: Subtilisin-like protease SBT2.3 (840 aa).

Positions 1 to 27 (MVRVMLVRFGFLLLMISFVFLSNNTLG) are cleaved as a signal peptide. A propeptide spans 28-146 (QQQDDDDDSA…IVLDYSVRTA (119 aa)) (activation peptide). The Inhibitor I9 domain occupies 38–146 (VYIVTLKQPP…IVLDYSVRTA (109 aa)). A compositionally biased stretch (basic residues) spans 61-81 (KSKFTPKLRPRNNSRKRHGKS). The segment at 61–85 (KSKFTPKLRPRNNSRKRHGKSKIPS) is disordered. N-linked (GlcNAc...) asparagine glycosylation is present at Asn-72. One can recognise a Peptidase S8 domain in the interval 148-694 (TYTPQFMGLP…SGFVNATAAL (547 aa)). Residue Asp-180 is the Charge relay system of the active site. Residues Asn-193 and Asn-241 are each glycosylated (N-linked (GlcNAc...) asparagine). His-255 (charge relay system) is an active-site residue. Residues Asn-398, Asn-427, Asn-480, Asn-525, and Asn-553 are each glycosylated (N-linked (GlcNAc...) asparagine). The PA domain occupies 418–513 (MISAFHALNN…MDMPGIIIPS (96 aa)). Ser-619 (charge relay system) is an active-site residue. N-linked (GlcNAc...) asparagine glycosylation is found at Asn-689, Asn-715, Asn-723, Asn-767, and Asn-808.

This sequence belongs to the peptidase S8 family.

The protein localises to the secreted. The chain is Subtilisin-like protease SBT2.3 from Arabidopsis thaliana (Mouse-ear cress).